A 481-amino-acid chain; its full sequence is UDP-N-acetylmuramate--L-alanine ligase (481 aa).

115–121 (GTHGKTT) serves as a coordination point for ATP.

It belongs to the MurCDEF family.

The protein resides in the cytoplasm. The enzyme catalyses UDP-N-acetyl-alpha-D-muramate + L-alanine + ATP = UDP-N-acetyl-alpha-D-muramoyl-L-alanine + ADP + phosphate + H(+). The protein operates within cell wall biogenesis; peptidoglycan biosynthesis. In terms of biological role, cell wall formation. The sequence is that of UDP-N-acetylmuramate--L-alanine ligase from Granulibacter bethesdensis (strain ATCC BAA-1260 / CGDNIH1).